The primary structure comprises 194 residues: Holliday junction branch migration complex subunit RuvA (194 aa).

The interval 1 to 61 (MYDFLTGIIK…DNQISLYGFK (61 aa)) is domain I. Positions 62 to 139 (TVKERNLFQK…GDFSKNIAPM (78 aa)) are domain II. The interval 139-143 (MKNLL) is flexible linker. The segment at 144–194 (ENSAELDDALAALVALGFSSKEVNKINPKLASLGELTTDAYIQKGLKLLTK) is domain III.

This sequence belongs to the RuvA family. As to quaternary structure, homotetramer. Forms an RuvA(8)-RuvB(12)-Holliday junction (HJ) complex. HJ DNA is sandwiched between 2 RuvA tetramers; dsDNA enters through RuvA and exits via RuvB. An RuvB hexamer assembles on each DNA strand where it exits the tetramer. Each RuvB hexamer is contacted by two RuvA subunits (via domain III) on 2 adjacent RuvB subunits; this complex drives branch migration. In the full resolvosome a probable DNA-RuvA(4)-RuvB(12)-RuvC(2) complex forms which resolves the HJ.

It is found in the cytoplasm. In terms of biological role, the RuvA-RuvB-RuvC complex processes Holliday junction (HJ) DNA during genetic recombination and DNA repair, while the RuvA-RuvB complex plays an important role in the rescue of blocked DNA replication forks via replication fork reversal (RFR). RuvA specifically binds to HJ cruciform DNA, conferring on it an open structure. The RuvB hexamer acts as an ATP-dependent pump, pulling dsDNA into and through the RuvAB complex. HJ branch migration allows RuvC to scan DNA until it finds its consensus sequence, where it cleaves and resolves the cruciform DNA. In Oenococcus oeni (strain ATCC BAA-331 / PSU-1), this protein is Holliday junction branch migration complex subunit RuvA.